Reading from the N-terminus, the 1197-residue chain is DExH-box ATP-dependent RNA helicase DExH3 (1197 aa).

In terms of domain architecture, Helicase ATP-binding spans 309–476 (LKAIAANQVV…FGGAPAMHIP (168 aa)). Residue 322 to 329 (GETGCGKT) coordinates ATP. The DEIH box motif lies at 423-426 (DEIH). The Helicase C-terminal domain maps to 564-738 (LIENVLCHIV…SLCLQIKSLG (175 aa)).

This sequence belongs to the DExH box helicase family.

It catalyses the reaction ATP + H2O = ADP + phosphate + H(+). This is DExH-box ATP-dependent RNA helicase DExH3 from Arabidopsis thaliana (Mouse-ear cress).